The following is a 413-amino-acid chain: Multidrug resistance protein MdtA (413 aa).

A signal peptide spans 1–25; sequence MKNKRRTYFFQFAVLAVVIATAYFA. The disordered stretch occupies residues 394-413; the sequence is ANTYDQMDKSKPSNSKVENT.

The protein belongs to the membrane fusion protein (MFP) (TC 8.A.1) family. As to quaternary structure, part of a tripartite efflux system composed of MdtA, MdtB and MdtC.

Its subcellular location is the cell inner membrane. In Xenorhabdus bovienii (strain SS-2004) (Xenorhabdus nematophila subsp. bovienii), this protein is Multidrug resistance protein MdtA.